Reading from the N-terminus, the 421-residue chain is Serine--tRNA ligase (421 aa).

An L-serine-binding site is contributed by 229–231 (TAE). ATP is bound at residue 260-262 (RSE). Residue glutamate 283 coordinates L-serine. Residue 347–350 (EISS) coordinates ATP. Serine 382 is an L-serine binding site.

It belongs to the class-II aminoacyl-tRNA synthetase family. Type-1 seryl-tRNA synthetase subfamily. In terms of assembly, homodimer. The tRNA molecule binds across the dimer.

The protein localises to the cytoplasm. It catalyses the reaction tRNA(Ser) + L-serine + ATP = L-seryl-tRNA(Ser) + AMP + diphosphate + H(+). The catalysed reaction is tRNA(Sec) + L-serine + ATP = L-seryl-tRNA(Sec) + AMP + diphosphate + H(+). It functions in the pathway aminoacyl-tRNA biosynthesis; selenocysteinyl-tRNA(Sec) biosynthesis; L-seryl-tRNA(Sec) from L-serine and tRNA(Sec): step 1/1. Functionally, catalyzes the attachment of serine to tRNA(Ser). Is also able to aminoacylate tRNA(Sec) with serine, to form the misacylated tRNA L-seryl-tRNA(Sec), which will be further converted into selenocysteinyl-tRNA(Sec). In Symbiobacterium thermophilum (strain DSM 24528 / JCM 14929 / IAM 14863 / T), this protein is Serine--tRNA ligase.